The primary structure comprises 444 residues: Maturase K (444 aa).

It belongs to the intron maturase 2 family. MatK subfamily.

The protein resides in the plastid. It is found in the chloroplast. In terms of biological role, usually encoded in the trnK tRNA gene intron. Probably assists in splicing its own and other chloroplast group II introns. In Chamaecyparis lawsoniana (Lawson false cypress), this protein is Maturase K.